We begin with the raw amino-acid sequence, 159 residues long: Large ribosomal subunit protein uL15 (159 aa).

The segment at 14 to 44 is disordered; the sequence is ASRKRVGRGRATGWGCTSGRGNKGQNSRAGA. Residues 23-35 are compositionally biased toward gly residues; that stretch reads RATGWGCTSGRGN.

Belongs to the universal ribosomal protein uL15 family. Part of the 50S ribosomal subunit.

Functionally, binds to the 23S rRNA. In Solidesulfovibrio magneticus (strain ATCC 700980 / DSM 13731 / RS-1) (Desulfovibrio magneticus), this protein is Large ribosomal subunit protein uL15.